The following is a 727-amino-acid chain: Elongation factor 2 (727 aa).

The tr-type G domain occupies 19-260; the sequence is DQIRNMGICA…MAITHLPNPL (242 aa). GTP is bound by residues 28–35, 94–98, and 148–151; these read AHIDHGKT, DTPGH, and NKVD. His603 carries the diphthamide modification.

The protein belongs to the TRAFAC class translation factor GTPase superfamily. Classic translation factor GTPase family. EF-G/EF-2 subfamily.

It is found in the cytoplasm. In terms of biological role, catalyzes the GTP-dependent ribosomal translocation step during translation elongation. During this step, the ribosome changes from the pre-translocational (PRE) to the post-translocational (POST) state as the newly formed A-site-bound peptidyl-tRNA and P-site-bound deacylated tRNA move to the P and E sites, respectively. Catalyzes the coordinated movement of the two tRNA molecules, the mRNA and conformational changes in the ribosome. The polypeptide is Elongation factor 2 (Methanococcus maripaludis (strain C6 / ATCC BAA-1332)).